We begin with the raw amino-acid sequence, 670 residues long: NAD-dependent histone deacetylase SIR2 (670 aa).

Disordered stretches follow at residues 1–157 (MTEY…EHPI) and 235–263 (DNDDSLPQKNSSETKNVSDTYTATYPSPS). Positions 45–68 (NEDVDVDADADVDADADADADAEE) are enriched in acidic residues. A compositionally biased stretch (basic and acidic residues) spans 69–81 (DAQKDILEETKAD). Acidic residues predominate over residues 82–92 (ELDEVVDEYEE). The span at 96 to 119 (SSNFNGTASDHVGITSSNTGSTAL) shows a compositional bias: polar residues. The span at 120-142 (AASSADTNSGSGNGTGTMATNGT) shows a compositional bias: low complexity. Residues 239–261 (SLPQKNSSETKNVSDTYTATYPS) show a composition bias toward polar residues. Residues 293-583 (RLTNFHTIDD…ALVAQKCGWD (291 aa)) enclose the Deacetylase sirtuin-type domain. Residues 318 to 337 (GAGISTSLGIPDFRSSEGFY) and 400 to 403 (QNID) contribute to the NAD(+) site. Histidine 420 functions as the Proton acceptor in the catalytic mechanism. Zn(2+)-binding residues include cysteine 428, cysteine 431, cysteine 452, and cysteine 455. Residues 527-529 (GTS), 552-554 (NKD), and cysteine 569 contribute to the NAD(+) site. The interval 617–670 (AELEAEEEKHLPLQQSTAALTPPVSLSADSPGRSSSSSPQPPTQTDIANNQTST) is disordered. Over residues 641–654 (SLSADSPGRSSSSS) the composition is skewed to low complexity. Residues 659-670 (TQTDIANNQTST) show a composition bias toward polar residues.

This sequence belongs to the sirtuin family. Class I subfamily. Zn(2+) is required as a cofactor.

The protein localises to the nucleus. The catalysed reaction is N(6)-acetyl-L-lysyl-[protein] + NAD(+) + H2O = 2''-O-acetyl-ADP-D-ribose + nicotinamide + L-lysyl-[protein]. Functionally, NAD-dependent deacetylase, which asts as a key regulator of gene expression believed to help form modified chromatin structures on the genes it regulates. It is involved in telomeric silencing and in hm mating type loci silencing. This Kluyveromyces lactis (strain ATCC 8585 / CBS 2359 / DSM 70799 / NBRC 1267 / NRRL Y-1140 / WM37) (Yeast) protein is NAD-dependent histone deacetylase SIR2 (SIR2).